Reading from the N-terminus, the 379-residue chain is Spermatogenesis-associated protein 17 (379 aa).

3 consecutive IQ domains span residues 48–77, 71–100, and 107–136; these read ENDA…VVTI, LNRV…AAYY, and YNEM…LKEY.

As to expression, strongly expressed in adult testis but weakly expressed in the spleen and thymus. Strongly expressed in round and elongating spermatids, and weakly or not expressed in spermatozoa.

It is found in the cytoplasm. The chain is Spermatogenesis-associated protein 17 (Spata17) from Mus musculus (Mouse).